Consider the following 305-residue polypeptide: Glycine--tRNA ligase alpha subunit (305 aa).

This sequence belongs to the class-II aminoacyl-tRNA synthetase family. As to quaternary structure, tetramer of two alpha and two beta subunits.

Its subcellular location is the cytoplasm. The enzyme catalyses tRNA(Gly) + glycine + ATP = glycyl-tRNA(Gly) + AMP + diphosphate. The polypeptide is Glycine--tRNA ligase alpha subunit (glyQ) (Vibrio cholerae serotype O1 (strain ATCC 39315 / El Tor Inaba N16961)).